Here is a 360-residue protein sequence, read N- to C-terminus: MADWSTLPVDLLNMIAGRLFSNIELKRFRSICRSWRSSVPGAGKKNPFRTRPLILLNPNPNKPLTDHRRRGEFLSRSAFFRVTLSSSPSQGWLIKSDVDVSSGKLHLLDPLSRLPMEHSRKRVDLSEFTITEIREAYQVHDWRTRKETRPIFKRVALVKDKEGDNQVLGIRSTGKMMYWDIKTWKAKEEGYEFSDIIVHKGQTYALDSIGIVYWIRSDLKFIRFGPLVGDWTGDRRLVECCGEFYIVERLVGESTWKRKADDTGYEYAKTVGFKVYKFDDEQGKMMEVKSLGDKAFVIATDTCFSVLAHEFYGCLENAIYFTDDTMIKVFKLDNGNGSSIETTIYPYAQSCFQMFVPSFL.

Residues Ala-2–Thr-50 enclose the F-box domain.

The protein is Putative F-box protein At1g65770 of Arabidopsis thaliana (Mouse-ear cress).